A 262-amino-acid chain; its full sequence is 3-methyl-2-oxobutanoate hydroxymethyltransferase (262 aa).

The Mg(2+) site is built by Asp-43 and Asp-82. Residues 43–44 (DS), Asp-82, and Lys-110 each bind 3-methyl-2-oxobutanoate. Glu-112 serves as a coordination point for Mg(2+). The Proton acceptor role is filled by Glu-179.

This sequence belongs to the PanB family. Homodecamer; pentamer of dimers. Requires Mg(2+) as cofactor.

The protein resides in the cytoplasm. It carries out the reaction 3-methyl-2-oxobutanoate + (6R)-5,10-methylene-5,6,7,8-tetrahydrofolate + H2O = 2-dehydropantoate + (6S)-5,6,7,8-tetrahydrofolate. Its pathway is cofactor biosynthesis; (R)-pantothenate biosynthesis; (R)-pantoate from 3-methyl-2-oxobutanoate: step 1/2. Catalyzes the reversible reaction in which hydroxymethyl group from 5,10-methylenetetrahydrofolate is transferred onto alpha-ketoisovalerate to form ketopantoate. This chain is 3-methyl-2-oxobutanoate hydroxymethyltransferase, found in Sodalis glossinidius (strain morsitans).